The primary structure comprises 517 residues: Lysine--tRNA ligase (517 aa).

The interval 1–21 (MTEPNRAQAPAQNKAAADTPA) is disordered. Residues 7-20 (AQAPAQNKAAADTP) are compositionally biased toward low complexity. Residues glutamate 427 and glutamate 434 each contribute to the Mg(2+) site.

Belongs to the class-II aminoacyl-tRNA synthetase family. In terms of assembly, homodimer. It depends on Mg(2+) as a cofactor.

It is found in the cytoplasm. The catalysed reaction is tRNA(Lys) + L-lysine + ATP = L-lysyl-tRNA(Lys) + AMP + diphosphate. This is Lysine--tRNA ligase from Cupriavidus taiwanensis (strain DSM 17343 / BCRC 17206 / CCUG 44338 / CIP 107171 / LMG 19424 / R1) (Ralstonia taiwanensis (strain LMG 19424)).